We begin with the raw amino-acid sequence, 1115 residues long: Calcium-transporting ATPase PAT1 (1115 aa).

Topologically, residues 1–99 (MTGSHEMESI…SIVLDALSDH (99 aa)) are stromal. The chain crosses the membrane as a helical span at residues 100–120 (ILILLIVAAVVSIVLGSIDYT). Residues 121 to 126 (SDHPET) lie on the Lumenal side of the membrane. The chain crosses the membrane as a helical span at residues 127 to 147 (GWIDGVAILVAVILVVGITSL). The Stromal segment spans residues 148–235 (NDFKNQARFR…KGQPQDNMDP (88 aa)). Residues 236 to 256 (FLISGSMVIEGFGTMLVTAVG) form a helical membrane-spanning segment. The Lumenal segment spans residues 257–287 (VNSFNGKTMMGLRVASEDTPLQMKLSVLASR). Residues 288–308 (IGYFGMGAAILMLLIAIPKYF) traverse the membrane as a helical segment. Topologically, residues 309–328 (IQRKVHDIEITREDAQPIVQ) are stromal. A helical transmembrane segment spans residues 329–349 (LVISAITIVVVAVPEGLPLAV). At 350–735 (TMALAYGMMK…GRNIYDAICK (386 aa)) the chain is on the lumenal side. Aspartate 385 functions as the 4-aspartylphosphate intermediate in the catalytic mechanism. Mg(2+) is bound by residues aspartate 678 and aspartate 682. A helical transmembrane segment spans residues 736–756 (FLQFQLTVNVVAVTVAFIGTL). Residues 757–832 (TSDVVEDKDN…GKNAPLITRS (76 aa)) lie on the Stromal side of the membrane. The disordered stretch occupies residues 762 to 784 (EDKDNSSSSGSADKVTEEEPRQG). A helical transmembrane segment spans residues 833 to 853 (MWKNIIGQAALQLAILFTILY). Over 854–873 (QGHNIFQHFVPQAHGPIIKN) the chain is Lumenal. A helical transmembrane segment spans residues 874–894 (GLHHYTLVFNCFVFLQLFNEI). Topologically, residues 895–913 (NARVLGSRTNPFKNFFNNP) are stromal. Residues 914–934 (IFIAVMIFTLGVQIIFVTFGG) form a helical membrane-spanning segment. Topologically, residues 935 to 943 (SATSTDSLY) are lumenal. The chain crosses the membrane as a helical span at residues 944–964 (IVEWICCVVVGAISLPVGLLL). At 965 to 1115 (RKIPIREPVV…LHLPVNQINN (151 aa)) the chain is on the stromal side. The segment at 984–1056 (AVYTSPSPNP…IPSSSSNLVN (73 aa)) is disordered. The segment covering 1040-1053 (NDNINTPIPSSSSN) has biased composition (low complexity).

Belongs to the cation transport ATPase (P-type) (TC 3.A.3) family. Type IIB subfamily.

It is found in the contractile vacuole membrane. The protein resides in the cell membrane. It carries out the reaction Ca(2+)(in) + ATP + H2O = Ca(2+)(out) + ADP + phosphate + H(+). Calcium ATPase involved in Ca(2+) homeostasis as a component of the contractile vacuole complex. This chain is Calcium-transporting ATPase PAT1 (patA), found in Dictyostelium discoideum (Social amoeba).